A 395-amino-acid polypeptide reads, in one-letter code: PVGETTLGRISNVLGEPVDNPGPVQSNTIFPIHRSAPAFTQLDTKLSIFETGIKVADLLAPYRRGGKIGLFGGAGVGKTVLITELINNIAKAHGGVSVSGGVGERTREGNDLYMEMKESKVINEQNISESKVALVYGQMNEPPGARMRVGSTASTMAEYFRDVNKQDVLLFIDNILRFVQAGSEVSALLGRMPPAVGYQPTLGTEMGSLQERITSTKEGSTTSIQAVYVPADDLTDPAPATTSAHLDATTVLSRGLAAKGIYPAVDPLDSTSTMSQPWIVGEEHYETAQGVKQTLQRYKELQDIIAILGLDELSEEDRLTVARARKIERFPSQPFFVAEVFTGSPGKYVSLPETIKGFQMILPGELDSLPEQAFYLVGNVDEATAKAAALQVEGQ.

An ATP-binding site is contributed by 72–79; the sequence is GGAGVGKT.

The protein belongs to the ATPase alpha/beta chains family. In terms of assembly, F-type ATPases have 2 components, CF(1) - the catalytic core - and CF(0) - the membrane proton channel. CF(1) has five subunits: alpha(3), beta(3), gamma(1), delta(1), epsilon(1). CF(0) has four main subunits: a(1), b(1), b'(1) and c(9-12).

The protein localises to the plastid. Its subcellular location is the chloroplast thylakoid membrane. It catalyses the reaction ATP + H2O + 4 H(+)(in) = ADP + phosphate + 5 H(+)(out). Functionally, produces ATP from ADP in the presence of a proton gradient across the membrane. The catalytic sites are hosted primarily by the beta subunits. This Microlepia platyphylla (Plate fern) protein is ATP synthase subunit beta, chloroplastic.